The sequence spans 125 residues: UPF0251 protein Dhaf_1981 (125 aa).

Belongs to the UPF0251 family.

The polypeptide is UPF0251 protein Dhaf_1981 (Desulfitobacterium hafniense (strain DSM 10664 / DCB-2)).